A 307-amino-acid chain; its full sequence is Methionyl-tRNA formyltransferase (307 aa).

Position 108–111 (108–111 (SLLP)) interacts with (6S)-5,6,7,8-tetrahydrofolate.

The protein belongs to the Fmt family.

The catalysed reaction is L-methionyl-tRNA(fMet) + (6R)-10-formyltetrahydrofolate = N-formyl-L-methionyl-tRNA(fMet) + (6S)-5,6,7,8-tetrahydrofolate + H(+). Its function is as follows. Attaches a formyl group to the free amino group of methionyl-tRNA(fMet). The formyl group appears to play a dual role in the initiator identity of N-formylmethionyl-tRNA by promoting its recognition by IF2 and preventing the misappropriation of this tRNA by the elongation apparatus. This chain is Methionyl-tRNA formyltransferase, found in Xanthomonas euvesicatoria pv. vesicatoria (strain 85-10) (Xanthomonas campestris pv. vesicatoria).